The sequence spans 433 residues: Glutamate-1-semialdehyde 2,1-aminomutase (433 aa).

Lys273 carries the N6-(pyridoxal phosphate)lysine modification.

This sequence belongs to the class-III pyridoxal-phosphate-dependent aminotransferase family. HemL subfamily. As to quaternary structure, homodimer. Pyridoxal 5'-phosphate serves as cofactor.

Its subcellular location is the cytoplasm. The enzyme catalyses (S)-4-amino-5-oxopentanoate = 5-aminolevulinate. The protein operates within porphyrin-containing compound metabolism; protoporphyrin-IX biosynthesis; 5-aminolevulinate from L-glutamyl-tRNA(Glu): step 2/2. This chain is Glutamate-1-semialdehyde 2,1-aminomutase, found in Polynucleobacter necessarius subsp. necessarius (strain STIR1).